Consider the following 1113-residue polypeptide: Atrial natriuretic peptide-converting enzyme (1113 aa).

Residues 1–112 (MGRVSFSVRV…QKLVTANLLR (112 aa)) are Cytoplasmic-facing. A helical; Signal-anchor for type II membrane protein membrane pass occupies residues 113–133 (FLLLVLIPCICALIVLLAILL). The Extracellular segment spans residues 134–1113 (SFVGTLKRVY…QTFLQKKSQG (980 aa)). Asn-147, Asn-202, and Asn-208 each carry an N-linked (GlcNAc...) asparagine glycan. The tract at residues 176 to 202 (APSLPPSQSTPAWTPRAPSPEDQSHRN) is disordered. In terms of domain architecture, FZ 1 spans 201 to 327 (RNTSTCMNIT…SSVRKSCFSL (127 aa)). Intrachain disulfides connect Cys-206–Cys-266, Cys-214–Cys-259, Cys-250–Cys-290, Cys-279–Cys-324, Cys-283–Cys-307, Cys-337–Cys-350, Cys-345–Cys-363, and Cys-357–Cys-372. N-linked (GlcNAc...) asparagine glycans are attached at residues Asn-298 and Asn-317. 4 consecutive LDL-receptor class A domains span residues 336–372 (LCGG…EAHC), 373–408 (NCSK…EQNC), 409–445 (DCNL…EVNC), and 446–483 (SCHS…ENCS). N-linked (GlcNAc...) asparagine glycosylation is present at Asn-373. Disulfide bonds link Cys-374/Cys-386, Cys-381/Cys-399, Cys-393/Cys-408, Cys-410/Cys-423, Cys-418/Cys-436, Cys-430/Cys-445, Cys-447/Cys-460, Cys-455/Cys-473, and Cys-467/Cys-482. The N-linked (GlcNAc...) asparagine glycan is linked to Asn-411. Asn-444 carries an N-linked (GlcNAc...) asparagine glycan. Asn-481, Asn-519, and Asn-537 each carry an N-linked (GlcNAc...) asparagine glycan. The FZ 2 domain occupies 518–641 (SNCSQCEPIT…SSDNQTCLLP (124 aa)). 14 disulfide bridges follow: Cys-523/Cys-586, Cys-531/Cys-579, Cys-570/Cys-608, Cys-597/Cys-638, Cys-601/Cys-625, Cys-648/Cys-660, Cys-655/Cys-673, Cys-667/Cys-682, Cys-684/Cys-698, Cys-692/Cys-711, Cys-705/Cys-720, Cys-723/Cys-735, Cys-730/Cys-748, and Cys-742/Cys-757. Asn-635 is a glycosylation site (N-linked (GlcNAc...) asparagine). 3 LDL-receptor class A domains span residues 647 to 682 (ECSP…EENC), 683 to 721 (GCKE…KNCS), and 722 to 757 (FCQD…EWGC). Asn-719 carries N-linked (GlcNAc...) asparagine glycosylation. Residues 758 to 853 (VTLSKNGNSS…SRSEISLLCS (96 aa)) enclose the SRCR domain. N-linked (GlcNAc...) asparagine glycans are attached at residues Asn-765 and Asn-828. 6 disulfide bridges follow: Cys-782–Cys-884, Cys-857–Cys-979, Cys-895–Cys-911, Cys-993–Cys-1058, Cys-1022–Cys-1037, and Cys-1048–Cys-1077. Positions 869–1102 (ILGGRTSRPG…FVGWIERQIY (234 aa)) constitute a Peptidase S1 domain. Active-site charge relay system residues include His-910 and Asp-959. Asn-970 carries N-linked (GlcNAc...) asparagine glycosylation. Ser-1052 functions as the Charge relay system in the catalytic mechanism. N-linked (GlcNAc...) asparagine glycosylation is present at Asn-1089.

It belongs to the peptidase S1 family. In terms of processing, N-glycosylated; required for processing and activation. Post-translationally, activated through proteolytic processing by a trypsin-like protease; cleaved into a N-terminal propeptide and an activated corin protease fragment. Atrial natriuretic peptide-converting enzyme, 180 kDa soluble fragment is produced by cleavage by ADAM10. Cleavage by ADAM10 to produce soluble 180 kDa soluble fragment takes place after the transmembrane region and before FZ 1. A disulfide bond links the activated corin protease fragment and the N-terminal propeptide. The disulfide bond also links the activated corin protease fragment with Atrial natriuretic peptide-converting enzyme, 180 kDa soluble fragment. As to expression, highly expressed in heart. Also expressed in pregnant uterus.

The protein resides in the cell membrane. It is found in the secreted. Its function is as follows. Serine-type endopeptidase involved in atrial natriuretic peptide (NPPA) processing. Converts through proteolytic cleavage the non-functional propeptide NPPA into the active hormone, thereby regulating blood pressure in heart and promoting natriuresis, diuresis and vasodilation. Proteolytic cleavage of pro-NPPA also plays a role in female pregnancy by promoting trophoblast invasion and spiral artery remodeling in uterus. Also acts as a regulator of sodium reabsorption in kidney. May also process pro-NPPB the B-type natriuretic peptide. The polypeptide is Atrial natriuretic peptide-converting enzyme (Corin) (Mus musculus (Mouse)).